A 434-amino-acid polypeptide reads, in one-letter code: Eukaryotic peptide chain release factor subunit 1-1 (434 aa).

The protein belongs to the eukaryotic release factor 1 family. Heterodimer of two subunits, one of which binds GTP.

It is found in the cytoplasm. Its function is as follows. Directs the termination of nascent peptide synthesis (translation) in response to the termination codons UAA, UAG and UGA. Modulates plant growth and development. The polypeptide is Eukaryotic peptide chain release factor subunit 1-1 (Brassica oleracea var. botrytis (Cauliflower)).